A 243-amino-acid polypeptide reads, in one-letter code: uncharacterized protein (243 aa).

Positions 1-16 (MKLLALVALCAVGVAS) are cleaved as a signal peptide. Asn-55 is a glycosylation site (N-linked (GlcNAc...) asparagine). Disordered stretches follow at residues 95–126 (SQGR…EKPS) and 208–235 (NQQQ…KPTV). 2 stretches are compositionally biased toward low complexity: residues 99 to 112 (NQQQ…SQGG) and 209 to 229 (QQQQ…STTL). A disulfide bridge links Cys-141 with Cys-239.

This sequence belongs to the protease inhibitor I33 family.

It is found in the secreted. This is an uncharacterized protein from Caenorhabditis elegans.